Here is a 466-residue protein sequence, read N- to C-terminus: Protein hob1 (466 aa).

In terms of domain architecture, BAR spans 17–269 (LRSKFNVGEI…RGDVKDRAEA (253 aa)). Coiled-coil stretches lie at residues 31-67 (IYED…LNHQ) and 177-204 (EKKL…LKEE). The tract at residues 280 to 342 (PTYKRPGMGP…ASDYSTPSAG (63 aa)) is disordered. Residues 294–303 (ATASSSSSFS) show a composition bias toward low complexity. Phosphoserine occurs at positions 298, 299, 301, and 303. Positions 407–466 (PAAEHVVALYDYAAQAAGDLSFHAGDRIEVVSRTDNQNEWWIGRLNGAQGQFPGNYVQLE) constitute an SH3 domain.

In terms of biological role, has a role in DNA damage signaling as a part of stress response processes. This Schizosaccharomyces pombe (strain 972 / ATCC 24843) (Fission yeast) protein is Protein hob1 (hob1).